Here is a 121-residue protein sequence, read N- to C-terminus: Phosphoribosyl-AMP cyclohydrolase (121 aa).

Residue aspartate 76 coordinates Mg(2+). Cysteine 77 contacts Zn(2+). Positions 78 and 80 each coordinate Mg(2+). Cysteine 93 and cysteine 100 together coordinate Zn(2+).

Belongs to the PRA-CH family. In terms of assembly, homodimer. It depends on Mg(2+) as a cofactor. The cofactor is Zn(2+).

It is found in the cytoplasm. It catalyses the reaction 1-(5-phospho-beta-D-ribosyl)-5'-AMP + H2O = 1-(5-phospho-beta-D-ribosyl)-5-[(5-phospho-beta-D-ribosylamino)methylideneamino]imidazole-4-carboxamide. It participates in amino-acid biosynthesis; L-histidine biosynthesis; L-histidine from 5-phospho-alpha-D-ribose 1-diphosphate: step 3/9. In terms of biological role, catalyzes the hydrolysis of the adenine ring of phosphoribosyl-AMP. The polypeptide is Phosphoribosyl-AMP cyclohydrolase (Methanococcoides burtonii (strain DSM 6242 / NBRC 107633 / OCM 468 / ACE-M)).